We begin with the raw amino-acid sequence, 417 residues long: uncharacterized protein (417 aa).

A helical transmembrane segment spans residues Ala-10–Pro-30. Residues Gln-84–Asn-106 are disordered. Residues Asn-86–Asn-106 show a composition bias toward polar residues. A helical transmembrane segment spans residues Leu-148–Val-168.

Its subcellular location is the cell membrane. This is an uncharacterized protein from Methanocaldococcus jannaschii (strain ATCC 43067 / DSM 2661 / JAL-1 / JCM 10045 / NBRC 100440) (Methanococcus jannaschii).